The chain runs to 214 residues: 3-isopropylmalate dehydratase small subunit (214 aa).

Belongs to the LeuD family. LeuD type 1 subfamily. Heterodimer of LeuC and LeuD.

It carries out the reaction (2R,3S)-3-isopropylmalate = (2S)-2-isopropylmalate. Its pathway is amino-acid biosynthesis; L-leucine biosynthesis; L-leucine from 3-methyl-2-oxobutanoate: step 2/4. Its function is as follows. Catalyzes the isomerization between 2-isopropylmalate and 3-isopropylmalate, via the formation of 2-isopropylmaleate. The sequence is that of 3-isopropylmalate dehydratase small subunit from Alcanivorax borkumensis (strain ATCC 700651 / DSM 11573 / NCIMB 13689 / SK2).